A 603-amino-acid chain; its full sequence is uncharacterized protein (603 aa).

The PE domain maps to 1 to 93 (MSFVIAAPET…AGAYASAEAA (93 aa)).

This sequence belongs to the mycobacterial PE family. PGRS subfamily.

This is an uncharacterized protein from Mycobacterium tuberculosis (strain ATCC 25618 / H37Rv).